The chain runs to 239 residues: DnaA regulatory inactivator Hda (239 aa).

The protein belongs to the DnaA family. HdA subfamily. In terms of assembly, the active form seems to be an ADP-bound monomer. Forms the RIDA complex (regulatory inactivation of DnaA) of ATP-DnaA, ADP-Hda and the DNA-loaded beta sliding clamp (dnaN).

Mediates the interaction of DNA replication initiator protein DnaA with DNA polymerase subunit beta sliding clamp (dnaN). Stimulates hydrolysis of ATP-DnaA to ADP-DnaA, rendering DnaA inactive for reinitiation, a process called regulatory inhibition of DnaA or RIDA. This chain is DnaA regulatory inactivator Hda, found in Yersinia enterocolitica serotype O:8 / biotype 1B (strain NCTC 13174 / 8081).